Here is a 553-residue protein sequence, read N- to C-terminus: Membrane protein insertase YidC (553 aa).

The next 5 helical transmembrane spans lie at 7-24 (VLWV…DNWQ), 365-385 (WGWA…PLSA), 435-455 (LPVV…LASV), 474-494 (PFFI…SLNP), and 509-529 (PIAF…YYVV).

It belongs to the OXA1/ALB3/YidC family. Type 1 subfamily. Interacts with the Sec translocase complex via SecD. Specifically interacts with transmembrane segments of nascent integral membrane proteins during membrane integration.

It is found in the cell inner membrane. In terms of biological role, required for the insertion and/or proper folding and/or complex formation of integral membrane proteins into the membrane. Involved in integration of membrane proteins that insert both dependently and independently of the Sec translocase complex, as well as at least some lipoproteins. Aids folding of multispanning membrane proteins. This chain is Membrane protein insertase YidC, found in Burkholderia orbicola (strain MC0-3).